Consider the following 179-residue polypeptide: Large ribosomal subunit protein uL6 (179 aa).

The protein belongs to the universal ribosomal protein uL6 family. In terms of assembly, part of the 50S ribosomal subunit.

Functionally, this protein binds to the 23S rRNA, and is important in its secondary structure. It is located near the subunit interface in the base of the L7/L12 stalk, and near the tRNA binding site of the peptidyltransferase center. The sequence is that of Large ribosomal subunit protein uL6 from Mycobacterium sp. (strain KMS).